A 716-amino-acid polypeptide reads, in one-letter code: 1,4-alpha-glucan branching enzyme GlgB (716 aa).

The active-site Nucleophile is the aspartate 399. The Proton donor role is filled by glutamate 452.

The protein belongs to the glycosyl hydrolase 13 family. GlgB subfamily. In terms of assembly, monomer.

The catalysed reaction is Transfers a segment of a (1-&gt;4)-alpha-D-glucan chain to a primary hydroxy group in a similar glucan chain.. Its pathway is glycan biosynthesis; glycogen biosynthesis. Catalyzes the formation of the alpha-1,6-glucosidic linkages in glycogen by scission of a 1,4-alpha-linked oligosaccharide from growing alpha-1,4-glucan chains and the subsequent attachment of the oligosaccharide to the alpha-1,6 position. The chain is 1,4-alpha-glucan branching enzyme GlgB from Rhodopseudomonas palustris (strain HaA2).